Here is a 477-residue protein sequence, read N- to C-terminus: Ectonucleotide pyrophosphatase/phosphodiesterase family member 5 (477 aa).

Positions 1-24 are cleaved as a signal peptide; the sequence is MTSKFLLVSFILAALSLSTTFSLQ. Zn(2+) is bound by residues Asp-36 and Thr-72. Thr-72 serves as the catalytic Nucleophile. Asn-101 and Asn-158 each carry an N-linked (GlcNAc...) asparagine glycan. Residues Asp-191, His-195, Asp-238, and His-239 each coordinate Zn(2+). Asn-292 and Asn-329 each carry an N-linked (GlcNAc...) asparagine glycan. His-339 serves as a coordination point for Zn(2+). N-linked (GlcNAc...) asparagine glycosylation is found at Asn-362, Asn-369, Asn-382, and Asn-389. A helical transmembrane segment spans residues 432–452; that stretch reads PYFIGVSLGSIIVIVFFVIFI.

The protein belongs to the nucleotide pyrophosphatase/phosphodiesterase family. Zn(2+) is required as a cofactor. Post-translationally, N-glycosylated.

It is found in the secreted. The protein localises to the membrane. In terms of biological role, can hydrolyze NAD but cannot hydrolyze nucleotide di- and triphosphates. Lacks lysopholipase D activity. May play a role in neuronal cell communication. This chain is Ectonucleotide pyrophosphatase/phosphodiesterase family member 5, found in Homo sapiens (Human).